The chain runs to 498 residues: Aminotransferase swnA (498 aa).

It belongs to the class-I pyridoxal-phosphate-dependent aminotransferase family. Pyridoxal 5'-phosphate is required as a cofactor.

Its pathway is mycotoxin biosynthesis. In terms of biological role, aminotransferase; part of the gene cluster that mediates the biosynthesis of swainsonine (SW), a cytotoxic fungal alkaloid and a potential cancer therapy drug. Swainsonine production occurs via a multibranched pathway and is dispensable for fungal colonization of plants and infection of insect hosts. The first step of swainsonine biosynthesis is the production of the precursor pipecolic acid (PA) via conversion of L-lysine (Lys) to 1-piperideine-6-carboxylate (P6C) by the aminotransferase swnA, the latter being further reduced to PA by the reductase swnR. PA can be converted from lysine by both the SW biosynthetic cluster and the unclustered genes such as lysine cyclodeaminase. The PKS-NRPS hybrid synthetase swnK uptakes and condensates PA and malonyl-CoA with and without skipping of the ketoreductase (KR) domain in order to produce 3 intermediates, 1-oxoindolizidine, (1S)-1-hydroxyindolizin, and (1R)-1-hydroxyindolizine; with the transisomer (1S)-1-hydroxyindolizin being predominant. The terminal thioester reductase (TE) domain of swnK is involved in reduction of the thioester bond to release the intermediate aldehydes. The oxidoreductase swnN could contribute to the reduction of 1-oxoindolizidine to (1S)-1-hydroxyindolizin and (1R)-1-hydroxyindolizine, contributing to the major route of SW production. The dioxygenase swnH2 would be responsible for the oxidization of (1R)-1-hydroxyindolizine into (1R,2S)-1,2-dihydroxyindolizine and of (1S)-1-hydroxyindolizin to yield both (1R,2S)-1,2-dihydroxyindolizine and (1S,2S)-1,2-dihydroxyindolizine. The dioxygenase swnH1 then performs the conversion of the 1,2-dihydroxyindolizine epimers to SW. The protein is Aminotransferase swnA of Metarhizium robertsii (strain ARSEF 23 / ATCC MYA-3075) (Metarhizium anisopliae (strain ARSEF 23)).